The primary structure comprises 255 residues: Thiazole synthase (255 aa).

K95 (schiff-base intermediate with DXP) is an active-site residue. 1-deoxy-D-xylulose 5-phosphate contacts are provided by residues G156, 182-183 (AG), and 204-205 (NT).

The protein belongs to the ThiG family. As to quaternary structure, homotetramer. Forms heterodimers with either ThiH or ThiS.

The protein resides in the cytoplasm. It carries out the reaction [ThiS sulfur-carrier protein]-C-terminal-Gly-aminoethanethioate + 2-iminoacetate + 1-deoxy-D-xylulose 5-phosphate = [ThiS sulfur-carrier protein]-C-terminal Gly-Gly + 2-[(2R,5Z)-2-carboxy-4-methylthiazol-5(2H)-ylidene]ethyl phosphate + 2 H2O + H(+). Its pathway is cofactor biosynthesis; thiamine diphosphate biosynthesis. In terms of biological role, catalyzes the rearrangement of 1-deoxy-D-xylulose 5-phosphate (DXP) to produce the thiazole phosphate moiety of thiamine. Sulfur is provided by the thiocarboxylate moiety of the carrier protein ThiS. In vitro, sulfur can be provided by H(2)S. The polypeptide is Thiazole synthase (Aeromonas salmonicida (strain A449)).